The sequence spans 155 residues: Small ribosomal subunit protein uS7cz/uS7cy (155 aa).

It belongs to the universal ribosomal protein uS7 family. In terms of assembly, part of the 30S ribosomal subunit.

The protein resides in the plastid. The protein localises to the chloroplast. Its function is as follows. One of the primary rRNA binding proteins, it binds directly to 16S rRNA where it nucleates assembly of the head domain of the 30S subunit. The polypeptide is Small ribosomal subunit protein uS7cz/uS7cy (rps7-A) (Nandina domestica (Heavenly bamboo)).